We begin with the raw amino-acid sequence, 200 residues long: Large ribosomal subunit protein uL4 (200 aa).

The disordered stretch occupies residues G38–R68. The segment covering G54–G65 has biased composition (basic residues).

It belongs to the universal ribosomal protein uL4 family. In terms of assembly, part of the 50S ribosomal subunit.

Functionally, one of the primary rRNA binding proteins, this protein initially binds near the 5'-end of the 23S rRNA. It is important during the early stages of 50S assembly. It makes multiple contacts with different domains of the 23S rRNA in the assembled 50S subunit and ribosome. Its function is as follows. Forms part of the polypeptide exit tunnel. The sequence is that of Large ribosomal subunit protein uL4 from Pseudomonas fluorescens (strain Pf0-1).